We begin with the raw amino-acid sequence, 87 residues long: Beta-toxin Cn4 (87 aa).

Residues 1–19 (MNSLLMITACLALVGTVWA) form the signal peptide. The LCN-type CS-alpha/beta domain occupies 20–85 (KEGYLVNSYT…VWPLKNKTCN (66 aa)). Cystine bridges form between C31/C84, C35/C60, C44/C65, and C48/C67. Residue N85 is modified to Asparagine amide.

It belongs to the long (4 C-C) scorpion toxin superfamily. Sodium channel inhibitor family. Beta subfamily. In terms of tissue distribution, expressed by the venom gland.

The protein localises to the secreted. In terms of biological role, beta toxins bind voltage-independently at site-4 of sodium channels (Nav) and shift the voltage of activation toward more negative potentials thereby affecting sodium channel activation and promoting spontaneous and repetitive firing. This toxin affects the activation mechanism of sodium channels of squid axon. It also competes with Cn2 in rat brain synaptosomes. Is lethal to mice. The chain is Beta-toxin Cn4 from Centruroides noxius (Mexican scorpion).